Here is a 203-residue protein sequence, read N- to C-terminus: Putative GPI-anchored protein YHR214W (203 aa).

An N-terminal signal peptide occupies residues 1 to 23; the sequence is MFNRFNKFQAAVALALLSRGALG. N-linked (GlcNAc...) asparagine glycans are attached at residues Asn28 and Asn138. Residue Asn184 is the site of GPI-anchor amidated asparagine attachment. Residues 185 to 203 constitute a propeptide, removed in mature form; it reads AGTFSLSNAILNGGSVSGL.

It localises to the cell membrane. The protein is Putative GPI-anchored protein YHR214W of Saccharomyces cerevisiae (strain ATCC 204508 / S288c) (Baker's yeast).